A 360-amino-acid polypeptide reads, in one-letter code: Probable mannan endo-1,4-beta-mannosidase A (360 aa).

Positions 1-18 (MKLSQILTFASLLSGALA) are cleaved as a signal peptide. The substrate site is built by Asn142 and Asn178. Glu179 functions as the Proton donor in the catalytic mechanism. Tyr254 provides a ligand contact to substrate. The active-site Nucleophile is the Glu287. Asn307 carries an N-linked (GlcNAc...) asparagine glycan. Trp317 is a substrate binding site.

Belongs to the glycosyl hydrolase 5 (cellulase A) family.

The protein resides in the secreted. The enzyme catalyses Random hydrolysis of (1-&gt;4)-beta-D-mannosidic linkages in mannans, galactomannans and glucomannans.. Functionally, endo-1,4-mannanase, a crucial enzyme for depolymerization of seed galactomannans and wood galactoglucomannans. The chain is Probable mannan endo-1,4-beta-mannosidase A (manA) from Aspergillus clavatus (strain ATCC 1007 / CBS 513.65 / DSM 816 / NCTC 3887 / NRRL 1 / QM 1276 / 107).